A 544-amino-acid polypeptide reads, in one-letter code: Serine/threonine-protein kinase PAK 1 (544 aa).

Residues 1-77 form a disordered region; that stretch reads MSNNGLDIQD…KEKERPEISL (77 aa). At Ser2 the chain carries N-acetylserine. The residue at position 21 (Ser21) is a Phosphoserine; by PKB and autocatalysis. Basic and acidic residues predominate over residues 68–77; the sequence is KEKERPEISL. An autoregulatory region region spans residues 70-140; it reads KERPEISLPS…YNSKKTSNSQ (71 aa). The region spanning 75–88 is the CRIB domain; the sequence is ISLPSDFEHTIHVG. A GTPase-binding region spans residues 75 to 105; the sequence is ISLPSDFEHTIHVGFDAVTGEFTGMPEQWAR. Position 84 is a phosphothreonine; by OXSR1 (Thr84). Phosphoserine is present on Ser115. Residues Tyr131 and Tyr142 each carry the phosphotyrosine modification. 2 positions are modified to phosphoserine; by autocatalysis: Ser144 and Ser149. Tyr153 carries the phosphotyrosine; by JAK2 modification. The interval 161–193 is disordered; the sequence is VKAVSETPAVPPVSEDEDDDDDGTPPPVIAPRP. Residue Ser174 is modified to Phosphoserine. Positions 174-183 are enriched in acidic residues; that stretch reads SEDEDDDDDG. A Phosphothreonine modification is found at Thr184. Ser198 carries the post-translational modification Phosphoserine; by autocatalysis. Tyr200 is modified (phosphotyrosine; by JAK2). Position 203 is a phosphoserine; by autocatalysis (Ser203). Phosphothreonine occurs at positions 211 and 218. The interval 212–250 is disordered; it reads PTRDVATSPISPTENNTTPPDALTRNTEKQKKKPKMSDE. Phosphoserine occurs at positions 219 and 222. Residues 219 to 230 show a composition bias toward polar residues; the sequence is SPISPTENNTTP. A phosphothreonine mark is found at Thr224, Thr228, and Thr229. One can recognise a Protein kinase domain in the interval 269 to 520; the sequence is YTRFEKIGQG…AKELLQHQFL (252 aa). 275–283 lines the ATP pocket; sequence IGQGASGTV. Tyr284 is modified (phosphotyrosine; by JAK2). Lys298 serves as a coordination point for ATP. Residue Asp388 is the Proton acceptor of the active site. Position 422 is a phosphothreonine; by autocatalysis, BRSK2 and PDPK1 (Thr422).

It belongs to the protein kinase superfamily. STE Ser/Thr protein kinase family. STE20 subfamily. In terms of assembly, homodimer in its autoinhibited state. Active as monomer. Interacts with GIT1. Component of cytoplasmic complexes, which also contains PXN, ARHGEF7 and GIT1. Interacts with NISCH. Interacts with DVL1; mediates the formation of a DVL1, MUSK and PAK1 ternary complex involved in AChR clustering. Binds to the caspase-cleaved p110 isoform of CDC2L1 and CDC2L2, p110C, but not the full-length proteins. Interacts with ARHGEF7. Interacts tightly with GTP-bound but not GDP-bound CDC42/P21 and RAC1. Probably found in a ternary complex composed of DSCAM, PAK1 and RAC1. Interacts with DSCAM (via cytoplasmic domain); the interaction is direct and enhanced in presence of RAC1. Interacts with SCRIB. Interacts with PDPK1. Interacts (via kinase domain) with RAF1. Interacts with NCK1 and NCK2. Interacts with TBCB. Interacts with BRSK2. Interacts with SNAI1. Interacts with CIB1 (via N-terminal region); the interaction is direct, promotes PAK1 activity and occurs in a calcium-dependent manner. Interacts with INPP5K. Interacts with gamma-tubulin. Interacts with RHOU; the interaction promotes PAK1 activation. Mg(2+) is required as a cofactor. Post-translationally, autophosphorylated in trans, meaning that in a dimer, one kinase molecule phosphorylates the other one. Activated by autophosphorylation at Thr-422 in response to a conformation change, triggered by interaction with GTP-bound CDC42 or RAC1. Activated by phosphorylation at Thr-422 by BRSK2 and by PDPK1. Phosphorylated by JAK2 in response to PRL; this increases PAK1 kinase activity. Phosphorylated at Ser-21 by PKB/AKT; this reduces interaction with NCK1 and association with focal adhesion sites. Upon DNA damage, phosphorylated at Thr-211 and translocates to the nucleoplasm. Phosphorylated at tyrosine residues, which can be enhanced by NTN1.

It localises to the cytoplasm. The protein resides in the cell junction. The protein localises to the focal adhesion. It is found in the cell projection. Its subcellular location is the lamellipodium. It localises to the cell membrane. The protein resides in the ruffle membrane. The protein localises to the invadopodium. It is found in the nucleus. Its subcellular location is the nucleoplasm. It localises to the chromosome. The protein resides in the cytoskeleton. The protein localises to the microtubule organizing center. It is found in the centrosome. The enzyme catalyses L-seryl-[protein] + ATP = O-phospho-L-seryl-[protein] + ADP + H(+). It catalyses the reaction L-threonyl-[protein] + ATP = O-phospho-L-threonyl-[protein] + ADP + H(+). With respect to regulation, phosphorylation of Thr-84 by OXSR1 inhibits activation. Activated by binding small G proteins. Binding of GTP-bound CDC42 or RAC1 to the autoregulatory region releases monomers from the autoinhibited dimer, and enables activation by phosphorylation of Thr-422. Functionally, protein kinase involved in intracellular signaling pathways downstream of integrins and receptor-type kinases that plays an important role in cytoskeleton dynamics, in cell adhesion, migration, proliferation, apoptosis, mitosis, and in vesicle-mediated transport processes. Can directly phosphorylate BAD and protects cells against apoptosis. Activated by interaction with CDC42 and RAC1. Functions as a GTPase effector that links the Rho-related GTPases CDC42 and RAC1 to the JNK MAP kinase pathway. Phosphorylates and activates MAP2K1, and thereby mediates activation of downstream MAP kinases. Involved in the reorganization of the actin cytoskeleton, actin stress fibers and of focal adhesion complexes. Phosphorylates the tubulin chaperone TBCB and thereby plays a role in the regulation of microtubule biogenesis and organization of the tubulin cytoskeleton. Plays a role in the regulation of insulin secretion in response to elevated glucose levels. Part of a ternary complex that contains PAK1, DVL1 and MUSK that is important for MUSK-dependent regulation of AChR clustering during the formation of the neuromuscular junction (NMJ). Activity is inhibited in cells undergoing apoptosis, potentially due to binding of CDC2L1 and CDC2L2. Phosphorylates MYL9/MLC2. Phosphorylates RAF1 at 'Ser-338' and 'Ser-339' resulting in: activation of RAF1, stimulation of RAF1 translocation to mitochondria, phosphorylation of BAD by RAF1, and RAF1 binding to BCL2. Phosphorylates SNAI1 at 'Ser-246' promoting its transcriptional repressor activity by increasing its accumulation in the nucleus. In podocytes, promotes NR3C2 nuclear localization. Required for atypical chemokine receptor ACKR2-induced phosphorylation of LIMK1 and cofilin (CFL1) and for the up-regulation of ACKR2 from endosomal compartment to cell membrane, increasing its efficiency in chemokine uptake and degradation. In synapses, seems to mediate the regulation of F-actin cluster formation performed by SHANK3, maybe through CFL1 phosphorylation and inactivation. Plays a role in RUFY3-mediated facilitating gastric cancer cells migration and invasion. In response to DNA damage, phosphorylates MORC2 which activates its ATPase activity and facilitates chromatin remodeling. In neurons, plays a crucial role in regulating GABA(A) receptor synaptic stability and hence GABAergic inhibitory synaptic transmission through its role in F-actin stabilization. In hippocampal neurons, necessary for the formation of dendritic spines and excitatory synapses; this function is dependent on kinase activity and may be exerted by the regulation of actomyosin contractility through the phosphorylation of myosin II regulatory light chain (MLC). Along with GIT1, positively regulates microtubule nucleation during interphase. Phosphorylates FXR1, promoting its localization to stress granules and activity. Phosphorylates ILK on 'Thr-173' and 'Ser-246', promoting nuclear export of ILK. This Bos taurus (Bovine) protein is Serine/threonine-protein kinase PAK 1.